Consider the following 601-residue polypeptide: Glutathione-regulated potassium-efflux system protein KefB (601 aa).

The next 13 membrane-spanning stretches (helical) occupy residues 4 to 24, 29 to 49, 55 to 75, 87 to 107, 115 to 135, 152 to 172, 177 to 197, 207 to 227, 230 to 250, 268 to 288, 291 to 311, 324 to 344, and 356 to 376; these read SDFLLAGVLFLFAAVAAVPLA, IGAVLGYLLAGIAIGPWGLGF, EILHFSELGVVFLMFIIGLEL, IFGVGAAQVLLSAALLAGLLM, AAVVGGIGLAMSSTAMALQLM, VLLFQDLAVIPALALVPLLAG, HFDWMKIGMKVLAFVGMLIGG, FIAASGVREVFTAATLLLVLG, LFMDALGLSMALGTFIAGVLL, GLLLGLFFISVGMSLNLGVLY, LLWVVISVVVLVAVKILVLYL, MQFAGVLSQGGEFAFVLFSTA, and ALLLVTVTLSMMTTPLLMKLV. Positions 400-519 constitute an RCK N-terminal domain; it reads KPQVIVVGFG…AGVTQFSRET (120 aa).

Belongs to the monovalent cation:proton antiporter 2 (CPA2) transporter (TC 2.A.37) family. KefB subfamily. Interacts with the regulatory subunit KefG.

Its subcellular location is the cell inner membrane. Pore-forming subunit of a potassium efflux system that confers protection against electrophiles. Catalyzes K(+)/H(+) antiport. This Escherichia coli (strain SMS-3-5 / SECEC) protein is Glutathione-regulated potassium-efflux system protein KefB.